Reading from the N-terminus, the 315-residue chain is Methionyl-tRNA formyltransferase (315 aa).

Residues 2–189 (SESLRIIFAG…LITTLKQLAD (188 aa)) form an N-terminal domain region. Residue 113-116 (SLLP) participates in (6S)-5,6,7,8-tetrahydrofolate binding. The tract at residues 210 to 315 (KEEARIDWSL…EWFVPGNRLV (106 aa)) is C-terminal domain.

Belongs to the Fmt family.

The enzyme catalyses L-methionyl-tRNA(fMet) + (6R)-10-formyltetrahydrofolate = N-formyl-L-methionyl-tRNA(fMet) + (6S)-5,6,7,8-tetrahydrofolate + H(+). Functionally, attaches a formyl group to the free amino group of methionyl-tRNA(fMet). The formyl group appears to play a dual role in the initiator identity of N-formylmethionyl-tRNA by promoting its recognition by IF2 and preventing the misappropriation of this tRNA by the elongation apparatus. In Escherichia coli O157:H7, this protein is Methionyl-tRNA formyltransferase.